Consider the following 335-residue polypeptide: 2,4-dienoyl-CoA reductase [(3E)-enoyl-CoA-producing], mitochondrial (335 aa).

The transit peptide at 1 to 34 (MKLPARVFFTLGSRLPCGLAPRRFFSYGTKILYQ) directs the protein to the mitochondrion. An N6-acetyllysine; alternate mark is found at Lys-42 and Lys-49. 2 positions are modified to N6-succinyllysine; alternate: Lys-42 and Lys-49. An NADP(+)-binding site is contributed by 66-71 (GGGTGL). The residue at position 69 (Thr-69) is a Phosphothreonine. Lys-73 carries the N6-succinyllysine modification. Arg-91 provides a ligand contact to NADP(+). Residue Arg-91 participates in substrate binding. Lys-97 carries the N6-acetyllysine; alternate modification. At Lys-97 the chain carries N6-succinyllysine; alternate. Asp-117 is an NADP(+) binding site. Residues Arg-119, Phe-149, and Ser-157 each contribute to the substrate site. The active-site Proton acceptor is Tyr-199. NADP(+) is bound at residue Lys-214. Residue Lys-230 is modified to N6-acetyllysine. Residue 240–243 (PGPI) coordinates NADP(+). At Lys-244 the chain carries N6-acetyllysine; alternate. Position 244 is an N6-succinyllysine; alternate (Lys-244). Arg-251 contacts substrate. Lys-260 and Lys-319 each carry N6-acetyllysine; alternate. N6-succinyllysine; alternate is present on residues Lys-260 and Lys-319.

This sequence belongs to the short-chain dehydrogenases/reductases (SDR) family. 2,4-dienoyl-CoA reductase subfamily. In terms of assembly, homotetramer. As to expression, heart = liver = pancreas &gt; kidney &gt;&gt; skeletal muscle = lung.

Its subcellular location is the mitochondrion. It carries out the reaction a (2E,4E)-dienoyl-CoA + NADPH + H(+) = a 4,5-saturated-(3E)-enoyl-CoA + NADP(+). It catalyses the reaction a (2E,4Z)-dienoyl-CoA + NADPH + H(+) = a 4,5-saturated-(3E)-enoyl-CoA + NADP(+). The enzyme catalyses (2E,4E)-hexadienoyl-CoA + NADPH + H(+) = (3E)-hexenoyl-CoA + NADP(+). Its function is as follows. Auxiliary enzyme of beta-oxidation. It participates in the metabolism of unsaturated fatty enoyl-CoA esters having double bonds in both even- and odd-numbered positions in mitochondria. Catalyzes the NADP-dependent reduction of 2,4-dienoyl-CoA to yield trans-3-enoyl-CoA. The sequence is that of 2,4-dienoyl-CoA reductase [(3E)-enoyl-CoA-producing], mitochondrial (DECR1) from Homo sapiens (Human).